Here is a 207-residue protein sequence, read N- to C-terminus: Ribosomal RNA large subunit methyltransferase E (207 aa).

Positions 60, 62, 80, 96, and 121 each coordinate S-adenosyl-L-methionine. Lysine 161 (proton acceptor) is an active-site residue.

The protein belongs to the class I-like SAM-binding methyltransferase superfamily. RNA methyltransferase RlmE family.

The protein localises to the cytoplasm. It catalyses the reaction uridine(2552) in 23S rRNA + S-adenosyl-L-methionine = 2'-O-methyluridine(2552) in 23S rRNA + S-adenosyl-L-homocysteine + H(+). Specifically methylates the uridine in position 2552 of 23S rRNA at the 2'-O position of the ribose in the fully assembled 50S ribosomal subunit. In Ectopseudomonas mendocina (strain ymp) (Pseudomonas mendocina), this protein is Ribosomal RNA large subunit methyltransferase E.